Reading from the N-terminus, the 152-residue chain is Transcription factor ATOH7 (152 aa).

Positions 40-92 (RRRLAANARERRRMQGLNTAFDRLRRVVPQWGQDKKLSKYETLQMALSYIMAL) constitute a bHLH domain.

In terms of assembly, forms a heterodimer with TCF3 isoform E47; interaction may be required for DNA-binding in certain situations.

It is found in the nucleus. It localises to the perikaryon. The protein resides in the cell projection. The protein localises to the axon. In terms of biological role, transcription factor that binds to DNA at the consensus sequence 5'-CAG[GC]TG-3'. Dimerization with TCF3 isoform E47 may be required in certain situations. Binds to gene promoters and enhancer elements, and thereby regulates a transcriptional program of retinal ganglion cell (RGC) determinant genes. Although the exact mechanism is not certain, retinal transcription regulation by ATOH7 has a role in RGC determination and survival, photoreceptor population development, targeting of RGC axons to the optic nerve and development of the retino-hypothalamic tract. Binds to its own promoter and enhancer sequences, suggesting autoregulation of ATOH7 transcription. Required for retinal circadian rhythm photoentrainment. Plays a role in brainstem auditory signaling and binaural processing. This chain is Transcription factor ATOH7, found in Homo sapiens (Human).